Here is a 258-residue protein sequence, read N- to C-terminus: Trans-aconitate 2-methyltransferase (258 aa).

It belongs to the methyltransferase superfamily. Tam family.

It localises to the cytoplasm. It carries out the reaction trans-aconitate + S-adenosyl-L-methionine = (E)-3-(methoxycarbonyl)pent-2-enedioate + S-adenosyl-L-homocysteine. Catalyzes the S-adenosylmethionine monomethyl esterification of trans-aconitate. The protein is Trans-aconitate 2-methyltransferase of Acidovorax ebreus (strain TPSY) (Diaphorobacter sp. (strain TPSY)).